The following is a 137-amino-acid chain: SPbeta prophage-derived uncharacterized protein YoqU (137 aa).

The polypeptide is SPbeta prophage-derived uncharacterized protein YoqU (yoqU) (Bacillus subtilis (strain 168)).